A 712-amino-acid chain; its full sequence is Elongation factor G (712 aa).

A tr-type G domain is found at 8 to 290; the sequence is TRYRNIGISA…AVIEFLPSPT (283 aa). GTP-binding positions include 17 to 24, 88 to 92, and 142 to 145; these read AHIDAGKT, DTPGH, and NKMD.

The protein belongs to the TRAFAC class translation factor GTPase superfamily. Classic translation factor GTPase family. EF-G/EF-2 subfamily.

The protein resides in the cytoplasm. Its function is as follows. Catalyzes the GTP-dependent ribosomal translocation step during translation elongation. During this step, the ribosome changes from the pre-translocational (PRE) to the post-translocational (POST) state as the newly formed A-site-bound peptidyl-tRNA and P-site-bound deacylated tRNA move to the P and E sites, respectively. Catalyzes the coordinated movement of the two tRNA molecules, the mRNA and conformational changes in the ribosome. In Acinetobacter baumannii (strain AB307-0294), this protein is Elongation factor G.